We begin with the raw amino-acid sequence, 241 residues long: DNA repair protein RecO (241 aa).

This sequence belongs to the RecO family.

Its function is as follows. Involved in DNA repair and RecF pathway recombination. This Vibrio cholerae serotype O1 (strain ATCC 39541 / Classical Ogawa 395 / O395) protein is DNA repair protein RecO.